The primary structure comprises 105 residues: Small ribosomal subunit protein uS10 (105 aa).

It belongs to the universal ribosomal protein uS10 family. In terms of assembly, part of the 30S ribosomal subunit.

Its function is as follows. Involved in the binding of tRNA to the ribosomes. This Rickettsia canadensis (strain McKiel) protein is Small ribosomal subunit protein uS10.